We begin with the raw amino-acid sequence, 303 residues long: Coenzyme PQQ synthesis protein B (303 aa).

Belongs to the PqqB family.

It functions in the pathway cofactor biosynthesis; pyrroloquinoline quinone biosynthesis. Its function is as follows. May be involved in the transport of PQQ or its precursor to the periplasm. The sequence is that of Coenzyme PQQ synthesis protein B from Pseudomonas syringae pv. syringae (strain B728a).